The sequence spans 35 residues: MSDIN-like toxin proprotein 8 (35 aa).

The propeptide occupies 1–10; it reads MSDINATRLP. The cyclopeptide (Phe-Pro) cross-link spans 11-18; the sequence is FVFVASPP. Residues 19–35 constitute a propeptide that is removed on maturation; the sequence is CVGDDIAMVLTRGENLC.

It belongs to the MSDIN fungal toxin family. Processed by the macrocyclase-peptidase enzyme POPB to yield a toxic cyclic octapeptide. POPB first removes 10 residues from the N-terminus. Conformational trapping of the remaining peptide forces the enzyme to release this intermediate rather than proceed to macrocyclization. The enzyme rebinds the remaining peptide in a different conformation and catalyzes macrocyclization of the N-terminal 8 residues. In terms of tissue distribution, expressed in basidiocarps.

Probable toxin that belongs to the MSDIN-like toxin family responsible for a large number of food poisoning cases and deaths. This chain is MSDIN-like toxin proprotein 8, found in Amanita exitialis (Guangzhou destroying angel).